The following is a 171-amino-acid chain: 3-hydroxydecanoyl-[acyl-carrier-protein] dehydratase (171 aa).

His-70 is an active-site residue.

The protein belongs to the thioester dehydratase family. FabA subfamily. As to quaternary structure, homodimer.

The protein localises to the cytoplasm. It catalyses the reaction a (3R)-hydroxyacyl-[ACP] = a (2E)-enoyl-[ACP] + H2O. The enzyme catalyses (3R)-hydroxydecanoyl-[ACP] = (2E)-decenoyl-[ACP] + H2O. The catalysed reaction is (2E)-decenoyl-[ACP] = (3Z)-decenoyl-[ACP]. Its pathway is lipid metabolism; fatty acid biosynthesis. Functionally, necessary for the introduction of cis unsaturation into fatty acids. Catalyzes the dehydration of (3R)-3-hydroxydecanoyl-ACP to E-(2)-decenoyl-ACP and then its isomerization to Z-(3)-decenoyl-ACP. Can catalyze the dehydratase reaction for beta-hydroxyacyl-ACPs with saturated chain lengths up to 16:0, being most active on intermediate chain length. This Shewanella frigidimarina (strain NCIMB 400) protein is 3-hydroxydecanoyl-[acyl-carrier-protein] dehydratase.